Here is a 161-residue protein sequence, read N- to C-terminus: Crossover junction endodeoxyribonuclease RuvC (161 aa).

Catalysis depends on residues aspartate 9, glutamate 72, and aspartate 144. Aspartate 9, glutamate 72, and aspartate 144 together coordinate Mg(2+).

Belongs to the RuvC family. As to quaternary structure, homodimer which binds Holliday junction (HJ) DNA. The HJ becomes 2-fold symmetrical on binding to RuvC with unstacked arms; it has a different conformation from HJ DNA in complex with RuvA. In the full resolvosome a probable DNA-RuvA(4)-RuvB(12)-RuvC(2) complex forms which resolves the HJ. Requires Mg(2+) as cofactor.

The protein resides in the cytoplasm. It carries out the reaction Endonucleolytic cleavage at a junction such as a reciprocal single-stranded crossover between two homologous DNA duplexes (Holliday junction).. In terms of biological role, the RuvA-RuvB-RuvC complex processes Holliday junction (HJ) DNA during genetic recombination and DNA repair. Endonuclease that resolves HJ intermediates. Cleaves cruciform DNA by making single-stranded nicks across the HJ at symmetrical positions within the homologous arms, yielding a 5'-phosphate and a 3'-hydroxyl group; requires a central core of homology in the junction. The consensus cleavage sequence is 5'-(A/T)TT(C/G)-3'. Cleavage occurs on the 3'-side of the TT dinucleotide at the point of strand exchange. HJ branch migration catalyzed by RuvA-RuvB allows RuvC to scan DNA until it finds its consensus sequence, where it cleaves and resolves the cruciform DNA. In Synechococcus sp. (strain ATCC 27144 / PCC 6301 / SAUG 1402/1) (Anacystis nidulans), this protein is Crossover junction endodeoxyribonuclease RuvC.